We begin with the raw amino-acid sequence, 1038 residues long: Ribosome quality control complex subunit 2 (1038 aa).

Residues 350 to 383 are a coiled coil; it reads ALRIQNQESQAQKKIDDARAENDRKIQALLDVQE. 3 disordered regions span residues 459–499, 708–824, and 877–898; these read LNTS…MKRK, KTSG…DEPG, and QRKKEEIMKREVREDRKNKREK. Residues 713-768 adopt a coiled-coil conformation; sequence EDNGDDDEEEEEEEEEEEEEEEEEEEEEEEEKEEEEKEEEQQQDEDDSNEVNGLEK. Acidic residues predominate over residues 714–761; the sequence is DNGDDDEEEEEEEEEEEEEEEEEEEEEEEEKEEEEKEEEQQQDEDDSN. The segment covering 780-794 has biased composition (basic and acidic residues); that stretch reads SFEHDNLEKDIEKHC. Residues 795–805 show a composition bias toward polar residues; that stretch reads TISSDTDSDSG. Position 797 is a phosphoserine (S797). A coiled-coil region spans residues 830–912; it reads IENINSNVRG…QALKFTKKEK (83 aa). The segment covering 877-894 has biased composition (basic and acidic residues); it reads QRKKEEIMKREVREDRKN.

The protein belongs to the NEMF family. As to quaternary structure, component of the ribosome quality control complex (RQC), composed of the E3 ubiquitin ligase RKR1/LTN1, RQC1 and RQC2, as well as CDC48 and its ubiquitin-binding cofactors associated with the 60S ribosomal subunit. RQC2 binds to the 40S-binding surface of tRNAs.

The protein resides in the cytoplasm. Key component of the ribosome quality control complex (RQC), a ribosome-associated complex that mediates the extraction of incompletely synthesized nascent chains from stalled ribosomes as well as their ubiquitin-mediated proteasomal degradation. Thereby, frees 60S subunit ribosomes from the stalled translation complex and prevents the accumulation of nascent polypeptide chains that are potentially toxic for the cell. Within the RQC complex, RQC2 specifically binds stalled 60S ribosomal subunits by recognizing an exposed, nascent chain-conjugated tRNA moiety and promotes the recruitment of RKR1/LTN1 to stalled 60S subunits. Following binding to stalled 60S ribosomal subunits, RQC2 mediates CAT tailing by recruiting alanine- and threonine-charged tRNA to the A-site and directing the elongation of stalled nascent chains independently of mRNA or 40S subunits, leading to non-templated C-terminal Ala and Thr extensions (CAT tails). CAT tails promote the RKR1/LTN1-mediated ubiquitination of incompletely synthesized nascent polypeptides: CAT tailing facilitates RKR1/LTN1-dependent ubiquitination by exposing lysine residues that would otherwise remain buried in the ribosomal exit tunnel. Following ubiquitination, incompletely synthesized nascent polypeptides are recognized by CDC48 and degraded by the proteasome. CAT-tailed proteins tend to aggregate and sequester chaperones and can induce proteotoxic stress; their RKR1/LTN1-dependent ubiquitination and degradation is required to prevent proteotoxic stress. In Saccharomyces cerevisiae (strain ATCC 204508 / S288c) (Baker's yeast), this protein is Ribosome quality control complex subunit 2.